The primary structure comprises 528 residues: Membrane protein insertase YidC (528 aa).

5 consecutive transmembrane segments (helical) span residues 13 to 33 (ILLAVVISFLFFVIYDYFFIP), 336 to 356 (WGWAIVVMTLIVRIILFPLTY), 406 to 426 (LPILLQIPIFFAIYRVLLNAI), 446 to 466 (YFILPILMGATMFLQQLITPM), and 481 to 501 (PVIFTFFFITFPAGLTLYWFV).

This sequence belongs to the OXA1/ALB3/YidC family. Type 1 subfamily. Interacts with the Sec translocase complex via SecD. Specifically interacts with transmembrane segments of nascent integral membrane proteins during membrane integration.

Its subcellular location is the cell inner membrane. Functionally, required for the insertion and/or proper folding and/or complex formation of integral membrane proteins into the membrane. Involved in integration of membrane proteins that insert both dependently and independently of the Sec translocase complex, as well as at least some lipoproteins. Aids folding of multispanning membrane proteins. This is Membrane protein insertase YidC from Campylobacter jejuni subsp. jejuni serotype O:2 (strain ATCC 700819 / NCTC 11168).